Reading from the N-terminus, the 97-residue chain is Essential MCU regulator, mitochondrial (97 aa).

A mitochondrion-targeting transit peptide spans 1–35 (MIVPRLALPISLALQRVSRRVAEHPHNLRILQRHM). Residues 53–73 (PFGLLAIFCAVIPGLFVGATI) form a helical membrane-spanning segment.

It belongs to the SMDT1/EMRE family.

The protein resides in the mitochondrion inner membrane. Its function is as follows. Essential regulatory subunit of the mitochondrial calcium uniporter MCU channel, a protein that mediates calcium uptake into mitochondria. The chain is Essential MCU regulator, mitochondrial from Drosophila melanogaster (Fruit fly).